The chain runs to 156 residues: MSRKNRAPKREVLPDPLYNSKLVTRLINRVMLDGKRGTATSIVYGAFEQIKEATGTDALEVFETAMENIMPVLEVRARRVGGSNYQVPVEVRPERRTTLGLRWLVTIARLRGEHTMQDRLAKEIMDAANNTGAAVKKREDTHRMAEANRAFAHFRW.

Belongs to the universal ribosomal protein uS7 family. As to quaternary structure, part of the 30S ribosomal subunit. Contacts proteins S9 and S11.

One of the primary rRNA binding proteins, it binds directly to 16S rRNA where it nucleates assembly of the head domain of the 30S subunit. Is located at the subunit interface close to the decoding center, probably blocks exit of the E-site tRNA. The sequence is that of Small ribosomal subunit protein uS7 from Streptococcus gordonii (strain Challis / ATCC 35105 / BCRC 15272 / CH1 / DL1 / V288).